Reading from the N-terminus, the 22-residue chain is Antimicrobial peptide 5 (22 aa).

Leu22 is modified (leucine amide).

Skin.

It is found in the secreted. Its function is as follows. Has very strong antimicrobial activity against Gram-positive bacterium S.aureus, Gram-negative bacterium E.coli and yeast C.albicans. Has strong hemolytic activity against human red blood cells. This Xenopus tropicalis (Western clawed frog) protein is Antimicrobial peptide 5.